The following is a 355-amino-acid chain: 3-dehydroquinate synthase (355 aa).

NAD(+) is bound by residues 71-76, 105-109, 129-130, K142, and K151; these read EGEERK, GVVGD, and TS. E184, H246, and H263 together coordinate Zn(2+).

It belongs to the sugar phosphate cyclases superfamily. Dehydroquinate synthase family. Co(2+) is required as a cofactor. Zn(2+) serves as cofactor. The cofactor is NAD(+).

The protein resides in the cytoplasm. It carries out the reaction 7-phospho-2-dehydro-3-deoxy-D-arabino-heptonate = 3-dehydroquinate + phosphate. Its pathway is metabolic intermediate biosynthesis; chorismate biosynthesis; chorismate from D-erythrose 4-phosphate and phosphoenolpyruvate: step 2/7. In terms of biological role, catalyzes the conversion of 3-deoxy-D-arabino-heptulosonate 7-phosphate (DAHP) to dehydroquinate (DHQ). The polypeptide is 3-dehydroquinate synthase (Streptococcus pneumoniae serotype 19F (strain G54)).